We begin with the raw amino-acid sequence, 327 residues long: Serpentine receptor class alpha-33 (327 aa).

Helical transmembrane passes span 20–40 (FSVY…VLAI), 56–76 (LLIT…FLQN), 133–153 (FSHA…STVF), 186–206 (IIPY…LIIY), 227–247 (AVVS…LFCF), and 270–290 (IIGW…AVFL).

This sequence belongs to the nematode receptor-like protein sra family.

It is found in the membrane. The polypeptide is Serpentine receptor class alpha-33 (sra-33) (Caenorhabditis elegans).